The primary structure comprises 318 residues: Olfactory receptor 13C9 (318 aa).

The Extracellular portion of the chain corresponds to 1–25 (MEWENQTILVEFFLKGHSVHPRLEL). The N-linked (GlcNAc...) asparagine glycan is linked to Asn5. Residues 26–46 (LFFVLIFIMYVVILLGNGTLI) traverse the membrane as a helical segment. Residues 47 to 54 (LISILDPH) lie on the Cytoplasmic side of the membrane. The helical transmembrane segment at 55-75 (LHTPMYFFLGNLSFLDICYTT) threads the bilayer. Residues 76–99 (TSIPSTLVSFLSERKTISFSGCAV) are Extracellular-facing. A disulfide bridge links Cys97 with Cys189. The chain crosses the membrane as a helical span at residues 100-120 (QMFLGLAMGTTECVLLGMMAF). Residues 121 to 139 (DRYVAICNPLRYPIIMSKN) lie on the Cytoplasmic side of the membrane. A helical transmembrane segment spans residues 140 to 160 (AYVPMAVGSWFAGIVNSAVQT). Residues 161 to 197 (TFVVQLPFCRKNVINHFSCEILAVMKLACADISGNEF) are Extracellular-facing. Residues 198–217 (LMLVATILFTLMPLLLIVIS) traverse the membrane as a helical segment. Topologically, residues 218–237 (YSLIISSILKIHSSEGRSKA) are cytoplasmic. Residues 238–258 (FSTCSAHLTVVIIFYGTILFM) traverse the membrane as a helical segment. Topologically, residues 259–277 (YMKPKSKETLNSDDLDATD) are extracellular. A helical transmembrane segment spans residues 278–298 (KIISMFYGVMTPMMNPLIYSL). The Cytoplasmic segment spans residues 299–318 (RNKDVKEAVKHLPNRRFFSK).

It belongs to the G-protein coupled receptor 1 family.

It is found in the cell membrane. In terms of biological role, odorant receptor. The protein is Olfactory receptor 13C9 (OR13C9) of Homo sapiens (Human).